We begin with the raw amino-acid sequence, 358 residues long: Protein UL24 (358 aa).

It belongs to the herpesviridae US22 family.

The protein localises to the virion tegument. The polypeptide is Protein UL24 (UL24) (Homo sapiens (Human)).